The sequence spans 387 residues: 3-ketoacyl-CoA thiolase (387 aa).

The active-site Acyl-thioester intermediate is the cysteine 91. Residues histidine 343 and cysteine 373 each act as proton acceptor in the active site.

Belongs to the thiolase-like superfamily. Thiolase family. As to quaternary structure, heterotetramer of two alpha chains (FadB) and two beta chains (FadA).

The protein localises to the cytoplasm. The enzyme catalyses an acyl-CoA + acetyl-CoA = a 3-oxoacyl-CoA + CoA. Its pathway is lipid metabolism; fatty acid beta-oxidation. Functionally, catalyzes the final step of fatty acid oxidation in which acetyl-CoA is released and the CoA ester of a fatty acid two carbons shorter is formed. The chain is 3-ketoacyl-CoA thiolase from Shewanella sp. (strain ANA-3).